A 416-amino-acid polypeptide reads, in one-letter code: Histidine--tRNA ligase (416 aa).

It belongs to the class-II aminoacyl-tRNA synthetase family. In terms of assembly, homodimer.

The protein localises to the cytoplasm. The catalysed reaction is tRNA(His) + L-histidine + ATP = L-histidyl-tRNA(His) + AMP + diphosphate + H(+). The sequence is that of Histidine--tRNA ligase from Clostridium novyi (strain NT).